Reading from the N-terminus, the 352-residue chain is MTFEEAINSIKELNIETMQKAQKRLDNLTKPLGSLGRLEEIVKQLAGITGELFPCVKNKKIVIMCADNGVVEEGVSSCPKSVTSSVTQNFLKGFTGVNVLSRHSRADIVVVDVGVDDDIDCPGVINRKIRKGTWNIMKGPAMTRNEAIKAIETGIEIVGKLKEKGVNLLGTGEMGVGNTTTSSAVASVLIGNDIGEMVGKGAGLTQKGLINKIEIIKNAIDINKPNPSDPIDVLAKVGGFDIAALTGCFLGAAAYRLPVMIDGFISATAALAAIKIKPECRNYILPSHGSAEPGNKKIMEALDMSPMLLLEMRLGEGSGAALAFHIIDAAVAAYNEMGTFGDAKIEQYKPLE.

Glutamate 316 (proton acceptor) is an active-site residue.

Belongs to the CobT family.

The enzyme catalyses 5,6-dimethylbenzimidazole + nicotinate beta-D-ribonucleotide = alpha-ribazole 5'-phosphate + nicotinate + H(+). Its pathway is nucleoside biosynthesis; alpha-ribazole biosynthesis; alpha-ribazole from 5,6-dimethylbenzimidazole: step 1/2. Catalyzes the synthesis of alpha-ribazole-5'-phosphate from nicotinate mononucleotide (NAMN) and 5,6-dimethylbenzimidazole (DMB). The protein is Nicotinate-nucleotide--dimethylbenzimidazole phosphoribosyltransferase of Ruminiclostridium cellulolyticum (strain ATCC 35319 / DSM 5812 / JCM 6584 / H10) (Clostridium cellulolyticum).